Consider the following 364-residue polypeptide: Histidinol-phosphate aminotransferase (364 aa).

At lysine 226 the chain carries N6-(pyridoxal phosphate)lysine.

It belongs to the class-II pyridoxal-phosphate-dependent aminotransferase family. Histidinol-phosphate aminotransferase subfamily. As to quaternary structure, homodimer. Pyridoxal 5'-phosphate is required as a cofactor.

It catalyses the reaction L-histidinol phosphate + 2-oxoglutarate = 3-(imidazol-4-yl)-2-oxopropyl phosphate + L-glutamate. Its pathway is amino-acid biosynthesis; L-histidine biosynthesis; L-histidine from 5-phospho-alpha-D-ribose 1-diphosphate: step 7/9. The sequence is that of Histidinol-phosphate aminotransferase from Sulfurimonas denitrificans (strain ATCC 33889 / DSM 1251) (Thiomicrospira denitrificans (strain ATCC 33889 / DSM 1251)).